Consider the following 258-residue polypeptide: Acyl-[acyl-carrier-protein]--UDP-N-acetylglucosamine O-acyltransferase (258 aa).

The protein belongs to the transferase hexapeptide repeat family. LpxA subfamily. In terms of assembly, homotrimer.

The protein localises to the cytoplasm. The enzyme catalyses a (3R)-hydroxyacyl-[ACP] + UDP-N-acetyl-alpha-D-glucosamine = a UDP-3-O-[(3R)-3-hydroxyacyl]-N-acetyl-alpha-D-glucosamine + holo-[ACP]. The protein operates within glycolipid biosynthesis; lipid IV(A) biosynthesis; lipid IV(A) from (3R)-3-hydroxytetradecanoyl-[acyl-carrier-protein] and UDP-N-acetyl-alpha-D-glucosamine: step 1/6. Functionally, involved in the biosynthesis of lipid A, a phosphorylated glycolipid that anchors the lipopolysaccharide to the outer membrane of the cell. This chain is Acyl-[acyl-carrier-protein]--UDP-N-acetylglucosamine O-acyltransferase, found in Azotobacter vinelandii (strain DJ / ATCC BAA-1303).